The primary structure comprises 431 residues: uncharacterized protein (431 aa).

Transmembrane regions (helical) follow at residues 33–53 (VARV…VIYL), 63–83 (FSVF…ANGL), 111–131 (VSGM…PLWS), 143–163 (VALL…LGML), 197–217 (LVGF…MLMT), 241–261 (AHSI…PVLL), 273–293 (GVVI…LTAM), 318–338 (LIGG…PWIM), 358–378 (AAAV…AAAL), 383–403 (SLGW…PLSL), and 407–427 (TVVA…VALA).

The protein to M.tuberculosis Rv1510 and Rv3630.

Its subcellular location is the cell membrane. This is an uncharacterized protein from Mycobacterium bovis (strain ATCC BAA-935 / AF2122/97).